A 104-amino-acid chain; its full sequence is uncharacterized protein (104 aa).

To M.jannaschii MJ1511.

This is an uncharacterized protein from Methanocaldococcus jannaschii (strain ATCC 43067 / DSM 2661 / JAL-1 / JCM 10045 / NBRC 100440) (Methanococcus jannaschii).